A 372-amino-acid chain; its full sequence is Probable O-methyltransferase 2 (372 aa).

Positions 216, 259, and 273 each coordinate S-adenosyl-L-methionine. The active-site Proton acceptor is the H277.

This sequence belongs to the class I-like SAM-binding methyltransferase superfamily. Cation-independent O-methyltransferase family. COMT subfamily. As to quaternary structure, homodimer. In terms of tissue distribution, expressed predominantly in root hairs.

Its function is as follows. O-methyltransferase of unknown substrate specificity. Not active on resorcinol, orcinol, guaiacol, eugenol, ferulic acid, p-coumaric acid, catechol, caffeic acid or monomethyl ethers of resorcinol or orcinol. The chain is Probable O-methyltransferase 2 (OMT2) from Sorghum bicolor (Sorghum).